A 281-amino-acid polypeptide reads, in one-letter code: Energy-coupling factor transporter ATP-binding protein EcfA1 (281 aa).

The ABC transporter domain maps to 7 to 242; the sequence is ISVEDIVFRY…NKELVRIGLD (236 aa). 42 to 49 is a binding site for ATP; sequence GHNGSGKS. Glutamate 168 serves as the catalytic Proton acceptor.

The protein belongs to the ABC transporter superfamily. Energy-coupling factor EcfA family. In terms of assembly, forms a stable energy-coupling factor (ECF) transporter complex composed of 2 membrane-embedded substrate-binding proteins (S component), 2 ATP-binding proteins (A component) and 2 transmembrane proteins (T component).

The protein resides in the cell membrane. Functionally, ATP-binding (A) component of a common energy-coupling factor (ECF) ABC-transporter complex. Unlike classic ABC transporters this ECF transporter provides the energy necessary to transport a number of different substrates. This chain is Energy-coupling factor transporter ATP-binding protein EcfA1, found in Bacillus subtilis (strain 168).